Here is a 992-residue protein sequence, read N- to C-terminus: RNA-binding protein 12 (992 aa).

In terms of domain architecture, RRM 1 spans 304–379 (LYVSVHGMPF…RYVEVSPATE (76 aa)). A phosphoserine mark is found at serine 352 and serine 375. A disordered region spans residues 393 to 424 (QSMGPSGQAHPPPQTLPRSKSPSGQKRSRSRS). The span at 408-417 (LPRSKSPSGQ) shows a compositional bias: polar residues. A phosphoserine mark is found at serine 420, serine 422, and serine 424. In terms of domain architecture, RRM 2 spans 430-507 (FCVYLKGLPF…RFIQVHPITK (78 aa)). The residue at position 525 (serine 525) is a Phosphoserine. Residues 849–913 (FGGIPQNFGN…PGFGASSGKP (65 aa)) form a disordered region. Low complexity predominate over residues 876–887 (LGSVPGHLSGPP). Residues 916–992 (TIIKVQNMPF…GSRKVKLVLG (77 aa)) enclose the RRM 3 domain.

It is found in the nucleus. This chain is RNA-binding protein 12 (Rbm12), found in Mus musculus (Mouse).